The primary structure comprises 683 residues: Dynein, 78 kDa intermediate chain, flagellar outer arm (683 aa).

The tract at residues Met1–Ala42 is disordered. 4 WD repeats span residues His358–Ile398, Lys407–Glu450, Asp562–Leu602, and Val608–Ser647.

It belongs to the dynein intermediate chain family. Consists of at least 3 heavy chains (alpha, beta and gamma), 2 intermediate chains and 8 light chains.

Its subcellular location is the cytoplasm. The protein localises to the cytoskeleton. The protein resides in the flagellum axoneme. In terms of biological role, is essential for arm assembly or attachment to the outer doublet microtubule. The polypeptide is Dynein, 78 kDa intermediate chain, flagellar outer arm (ODA9) (Chlamydomonas reinhardtii (Chlamydomonas smithii)).